Here is a 509-residue protein sequence, read N- to C-terminus: Galactose-1-phosphate uridylyltransferase (509 aa).

The protein belongs to the galactose-1-phosphate uridylyltransferase type 2 family.

It localises to the cytoplasm. The enzyme catalyses alpha-D-galactose 1-phosphate + UDP-alpha-D-glucose = alpha-D-glucose 1-phosphate + UDP-alpha-D-galactose. The protein operates within carbohydrate metabolism; galactose metabolism. This is Galactose-1-phosphate uridylyltransferase from Fusobacterium nucleatum subsp. nucleatum (strain ATCC 25586 / DSM 15643 / BCRC 10681 / CIP 101130 / JCM 8532 / KCTC 2640 / LMG 13131 / VPI 4355).